A 541-amino-acid chain; its full sequence is Protein MGF 505-10R (541 aa).

Belongs to the asfivirus MGF 505 family.

Functionally, plays a role in virus cell tropism, and may be required for efficient virus replication in macrophages. In Ornithodoros (relapsing fever ticks), this protein is Protein MGF 505-10R.